The following is a 311-amino-acid chain: 4-hydroxy-tetrahydrodipicolinate synthase (311 aa).

A pyruvate-binding site is contributed by T51. Y140 functions as the Proton donor/acceptor in the catalytic mechanism. Residue K168 is the Schiff-base intermediate with substrate of the active site. Residue I209 coordinates pyruvate.

It belongs to the DapA family. Homotetramer; dimer of dimers.

It is found in the cytoplasm. It carries out the reaction L-aspartate 4-semialdehyde + pyruvate = (2S,4S)-4-hydroxy-2,3,4,5-tetrahydrodipicolinate + H2O + H(+). Its pathway is amino-acid biosynthesis; L-lysine biosynthesis via DAP pathway; (S)-tetrahydrodipicolinate from L-aspartate: step 3/4. Its function is as follows. Catalyzes the condensation of (S)-aspartate-beta-semialdehyde [(S)-ASA] and pyruvate to 4-hydroxy-tetrahydrodipicolinate (HTPA). In Streptococcus pneumoniae (strain ATCC BAA-255 / R6), this protein is 4-hydroxy-tetrahydrodipicolinate synthase.